Reading from the N-terminus, the 627-residue chain is Probable inactive receptor kinase At3g02880 (627 aa).

An N-terminal signal peptide occupies residues 1–23 (MKYKRKLSLSVVFLFVFYLAAVT). 5 LRR repeats span residues 91–112 (QLKT…DFSN), 115–137 (LLRY…LFTL), 139–161 (SIIR…VNSA), 163–184 (RLVT…ITLP), and 185–206 (LQQF…LSSW). Residues 222–246 (DTCEAESPNGGDAGGPNTPPEKKDS) are disordered. The helical transmembrane segment at 253-273 (AIVGIVIGCVVGLLLLLLILF) threads the bilayer. The 276-residue stretch at 345–620 (KASAEVLGKG…LIEEVSHSSG (276 aa)) folds into the Protein kinase domain. Ser347 carries the phosphoserine modification. ATP-binding positions include 351 to 359 (LGKGTVGSS) and Lys373. A helical transmembrane segment spans residues 389–409 (LHVLGSMSHANLVTLIAYYFS). Ser424 carries the phosphoserine modification. Thr444 carries the post-translational modification Phosphothreonine. A Phosphoserine modification is found at Ser519. At Thr595 the chain carries Phosphothreonine. Phosphoserine occurs at positions 621 and 626.

This sequence belongs to the protein kinase superfamily. Ser/Thr protein kinase family.

It localises to the membrane. This is Probable inactive receptor kinase At3g02880 from Arabidopsis thaliana (Mouse-ear cress).